Reading from the N-terminus, the 520-residue chain is Cytosol aminopeptidase (520 aa).

Residues Lys-286 and Asp-291 each coordinate Zn(2+). The active site involves Lys-298. 3 residues coordinate Zn(2+): Asp-309, Asp-368, and Glu-370. Residue Arg-372 is part of the active site.

It belongs to the peptidase M17 family. As to quaternary structure, homohexamer. Zn(2+) serves as cofactor.

It localises to the cytoplasm. It carries out the reaction Release of an N-terminal amino acid, Xaa-|-Yaa-, in which Xaa is preferably Leu, but may be other amino acids including Pro although not Arg or Lys, and Yaa may be Pro. Amino acid amides and methyl esters are also readily hydrolyzed, but rates on arylamides are exceedingly low.. The enzyme catalyses Release of N-terminal proline from a peptide.. Presumably involved in the processing and regular turnover of intracellular proteins. Catalyzes the removal of unsubstituted N-terminal amino acids from various peptides. This chain is Cytosol aminopeptidase (lap), found in Dictyostelium discoideum (Social amoeba).